The chain runs to 758 residues: G-protein alpha subunit activating protein gbas-1 (758 aa).

A compositionally biased stretch (acidic residues) spans L30–L48. A disordered region spans residues L30–R70. A compositionally biased stretch (low complexity) spans S49 to K61. Residues E653–S666 carry the GBA motif. Residues A668–Q690 are disordered. The segment covering P676–P689 has biased composition (pro residues).

As to quaternary structure, interacts (via GBA motif) with guanine nucleotide-binding protein G(o) subunit alpha goa-1 (in GDP-bound form); the interaction leads to activation of goa-1. In terms of tissue distribution, expressed in some neurons including the head and tail neurons, HSN and VC, in a subset of glial cells, in the distal tips cells and in the intestine.

Functionally, acts as a non-receptor guanine nucleotide exchange factor which binds to and activates G-protein alpha subunit goa-1. The protein is G-protein alpha subunit activating protein gbas-1 of Caenorhabditis elegans.